The following is a 332-amino-acid chain: 2,3-diketo-L-gulonate reductase (332 aa).

Catalysis depends on His44, which acts as the Proton donor. NAD(+)-binding positions include 168–174 (ITMVDMS), 224–225 (WK), and 304–306 (GHE).

The protein belongs to the LDH2/MDH2 oxidoreductase family. DlgD subfamily. In terms of assembly, homodimer.

The protein resides in the cytoplasm. It carries out the reaction 3-dehydro-L-gulonate + NAD(+) = 2,3-dioxo-L-gulonate + NADH + H(+). The enzyme catalyses 3-dehydro-L-gulonate + NADP(+) = 2,3-dioxo-L-gulonate + NADPH + H(+). In terms of biological role, catalyzes the reduction of 2,3-diketo-L-gulonate in the presence of NADH, to form 3-keto-L-gulonate. In Salmonella heidelberg (strain SL476), this protein is 2,3-diketo-L-gulonate reductase.